The sequence spans 258 residues: Trans-aconitate 2-methyltransferase (258 aa).

It belongs to the methyltransferase superfamily. Tam family.

The protein resides in the cytoplasm. The catalysed reaction is trans-aconitate + S-adenosyl-L-methionine = (E)-3-(methoxycarbonyl)pent-2-enedioate + S-adenosyl-L-homocysteine. Functionally, catalyzes the S-adenosylmethionine monomethyl esterification of trans-aconitate. This chain is Trans-aconitate 2-methyltransferase, found in Acidovorax ebreus (strain TPSY) (Diaphorobacter sp. (strain TPSY)).